The chain runs to 596 residues: Putative terpene synthase 3, chloroplastic (596 aa).

A chloroplast-targeting transit peptide spans 1–46 (MATLSMQVSTLSKQVKNLNTFGMGSASKLPMVARRVSTIRLRPICS). Positions 349 and 353 each coordinate Mn(2+). A DDXXD motif motif is present at residues 349–353 (DDVYD). Homodimerization regions lie at residues 355-361 (YGTLDEL) and 427-464 (EAKW…FTLP). Residues Asp-493 and Glu-501 each coordinate Mn(2+).

It belongs to the terpene synthase family. In terms of assembly, homodimer. It depends on Mn(2+) as a cofactor. Mg(2+) is required as a cofactor.

The protein localises to the plastid. Its subcellular location is the chloroplast. It functions in the pathway secondary metabolite biosynthesis; terpenoid biosynthesis. Functionally, putative monoterpene synthase. This Thymus vulgaris (Thyme) protein is Putative terpene synthase 3, chloroplastic.